A 620-amino-acid polypeptide reads, in one-letter code: MSKSKCSVGLMSSVVAPAKEPNAVGPKEVELILVKEQNGVQLTSSTLTNPRQSPVEAQDRETWGKKIDFLLSVIGFAVDLANVWRFPYLCYKNGGGAFLVPYLLFMVIAGMPLFYMELALGQFNREGAAGVWKICPILKGVGFTVILISLYVGFFYNVIIAWALHYLFSSFTTELPWIHCNNSWNSPNCSDAHPGDSSGDSSGLNDTFGTTPAAEYFERGVLHLHQSHGIDDLGPPRWQLTACLVLVIVLLYFSLWKGVKTSGKVVWITATMPYVVLTALLLRGVTLPGAIDGIRAYLSVDFYRLCEASVWIDAATQVCFSLGVGFGVLIAFSSYNKFTNNCYRDAIVTTSINSLTSFSSGFVVFSFLGYMAQKHSVPIGDVAKDGPGLIFIIYPEAIATLPLSSAWAVVFFIMLLTLGIDSAMGGMESVITGLIDEFQLLHRHRELFTLFIVLATFLLSLFCVTNGGIYVFTLLDHFAAGTSILFGVLIEAIGVAWFYGVGQFSDDIQQMTGQRPSLYWRLCWKLVSPCFLLFVVVVSIVTFRPPHYGAYIFPDWANALGWVIATSSMAMVPIYAAYKFCSLPGSFREKLAYAIAPEKDRELVDRGEVRQFTLRHWLKV.

Residues 1–56 (MSKSKCSVGLMSSVVAPAKEPNAVGPKEVELILVKEQNGVQLTSSTLTNPRQSPVE) are Cytoplasmic-facing. Residues 57-95 (AQDRETWGKKIDFLLSVIGFAVDLANVWRFPYLCYKNGG) form a discontinuously helical membrane-spanning segment. Residues G75, A77, V78, D79, and N82 each coordinate Na(+). D79 serves as a coordination point for dopamine. The next 2 helical transmembrane spans lie at 96 to 127 (GAFLVPYLLFMVIAGMPLFYMELALGQFNREG) and 128 to 171 (AAGV…FSSF). Dopamine contacts are provided by S149 and G153. At 172–236 (TTELPWIHCN…SHGIDDLGPP (65 aa)) the chain is on the extracellular side. C180 and C189 form a disulfide bridge. N181, N188, and N205 each carry an N-linked (GlcNAc...) asparagine glycan. 2 helical membrane-spanning segments follow: residues 237–256 (RWQLTACLVLVIVLLYFSLW) and 257–287 (KGVKTSGKVVWITATMPYVVLTALLLRGVTL). Residues 288–306 (PGAIDGIRAYLSVDFYRLC) lie on the Extracellular side of the membrane. The discontinuously helical transmembrane segment at 307–335 (EASVWIDAATQVCFSLGVGFGVLIAFSSY) threads the bilayer. Q317 is a chloride binding site. Dopamine is bound at residue F320. Residues S321 and N353 each contribute to the Na(+) site. Position 321 (S321) interacts with chloride. A helical transmembrane segment spans residues 336-376 (NKFTNNCYRDAIVTTSINSLTSFSSGFVVFSFLGYMAQKHS). S357 contributes to the chloride binding site. The Extracellular segment spans residues 377-400 (VPIGDVAKDGPGLIFIIYPEAIAT). Transmembrane regions (helical) follow at residues 401-442 (LPLS…QLLH), 443-466 (RHRELFTLFIVLATFLLSLFCVTN), and 467-499 (GGIYVFTLLDHFAAGTSILFGVLIEAIGVAWFY). 3 residues coordinate Na(+): L418, D421, and S422. Dopamine is bound by residues S422 and A423. The Cytoplasmic portion of the chain corresponds to 500-516 (GVGQFSDDIQQMTGQRP). A helical membrane pass occupies residues 517–542 (SLYWRLCWKLVSPCFLLFVVVVSIVT). Topologically, residues 543–553 (FRPPHYGAYIF) are extracellular. A helical transmembrane segment spans residues 554 to 583 (PDWANALGWVIATSSMAMVPIYAAYKFCSL). Positions 561–590 (GWVIATSSMAMVPIYAAYKFCSLPGSFREK) are interaction with TGFB1I1. At 584–620 (PGSFREKLAYAIAPEKDRELVDRGEVRQFTLRHWLKV) the chain is on the cytoplasmic side.

This sequence belongs to the sodium:neurotransmitter symporter (SNF) (TC 2.A.22) family. SLC6A3 subfamily. Monomer. Homooligomer; disulfide-linked. Interacts with PRKCABP and TGFB1I1. Interacts (via N-terminus) with SYNGR3 (via N-terminus). Interacts with SLC18A2. Interacts with TOR1A (ATP-bound); TOR1A regulates SLC6A3 subcellular location. Interacts with alpha-synuclein/SNCA. Interacts with SEPTIN4. In terms of tissue distribution, highly expressed in substantia nigra. Expressed in axonal varicosities in dopaminergic nerve terminals (at protein level). Expressed in the striatum (at protein level).

The protein localises to the cell membrane. It is found in the cell projection. Its subcellular location is the neuron projection. The protein resides in the axon. It catalyses the reaction dopamine(out) + chloride(out) + Na(+)(out) = dopamine(in) + chloride(in) + Na(+)(in). The enzyme catalyses dopamine(out) + chloride(out) + 2 Na(+)(out) = dopamine(in) + chloride(in) + 2 Na(+)(in). It carries out the reaction (R)-noradrenaline(out) + chloride(out) + Na(+)(out) = (R)-noradrenaline(in) + chloride(in) + Na(+)(in). With respect to regulation, inhibited by cocaine, which occupies the same binding site as dopamine. Inhibited by zinc ions. Enhanced by the antibiotic valinomycin. Inhibited by benztropine. Inhibited by GBR 12909 dihydrochloride and amphetamine. Inhibited by mazindol, GBR 12783 dihydrochloride, nomifensine, diclofensine, amfonelic acid, Lu 19005, Win-35428, bupropion and ritalin. In terms of biological role, mediates sodium- and chloride-dependent transport of dopamine. Also mediates sodium- and chloride-dependent transport of norepinephrine (also known as noradrenaline). Regulator of light-dependent retinal hyaloid vessel regression, downstream of OPN5 signaling. This is Sodium-dependent dopamine transporter (SLC6A3) from Homo sapiens (Human).